A 156-amino-acid polypeptide reads, in one-letter code: Small ribosomal subunit protein uS7 (156 aa).

It belongs to the universal ribosomal protein uS7 family. Part of the 30S ribosomal subunit. Contacts proteins S9 and S11.

Its function is as follows. One of the primary rRNA binding proteins, it binds directly to 16S rRNA where it nucleates assembly of the head domain of the 30S subunit. Is located at the subunit interface close to the decoding center, probably blocks exit of the E-site tRNA. The chain is Small ribosomal subunit protein uS7 from Thermoanaerobacter sp. (strain X514).